Consider the following 402-residue polypeptide: NADH dehydrogenase [ubiquinone] 1 alpha subcomplex subunit 9, mitochondrial (402 aa).

Residues 1–43 (MQVVSRRLVQRPLVGGASIYSSSSLRSLYGVSNHLNGTDNCRY) constitute a mitochondrion transit peptide.

Belongs to the complex I NDUFA9 subunit family. As to quaternary structure, complex I is composed of at least 49 different subunits. This a component of the hydrophobic protein fraction. Requires FAD as cofactor.

The protein resides in the mitochondrion matrix. Functionally, accessory subunit of the mitochondrial membrane respiratory chain NADH dehydrogenase (Complex I), that is believed not to be involved in catalysis. Complex I functions in the transfer of electrons from NADH to the respiratory chain. The immediate electron acceptor for the enzyme is believed to be ubiquinone. The chain is NADH dehydrogenase [ubiquinone] 1 alpha subcomplex subunit 9, mitochondrial from Arabidopsis thaliana (Mouse-ear cress).